The sequence spans 237 residues: MALPPSPLAMEYVNDFDLMKFEVKREPSEGRPGPPTASLGSTPYSSVPPSPTFSEPGMVGATEGTRPGLEELYWLATLQQQLGAGEALGLSPEEAMELLQGQGPVPVDGPHGYYPGSPEETGAQHVQLAERFSDAALVSMSVRELNRQLRGCGRDEALRLKQRRRTLKNRGYAQACRSKRLQQRRGLEAERARLAAQLDALRAEVARLARERDLYKARCDRLTSSGPGSGDPSHLFL.

Glycyl lysine isopeptide (Lys-Gly) (interchain with G-Cter in SUMO) cross-links involve residues lysine 20 and lysine 24. A disordered region spans residues 23 to 57; the sequence is VKREPSEGRPGPPTASLGSTPYSSVPPSPTFSEPG. The tract at residues 30–93 is minimal transactivation domain (MTD); sequence GRPGPPTASL…AGEALGLSPE (64 aa). The segment at 159–185 is basic motif; sequence RLKQRRRTLKNRGYAQACRSKRLQQRR. In terms of domain architecture, bZIP spans 159–222; the sequence is RLKQRRRTLK…DLYKARCDRL (64 aa). The tract at residues 187 to 208 is leucine-zipper; that stretch reads LEAERARLAAQLDALRAEVARL.

The protein belongs to the bZIP family. In terms of assembly, interacts with FIZ1; this interaction represses transactivation. Interacts (via the leucine-zipper domain) with CRX. Phosphorylated. Post-translationally, disumoylated at Lys-20. Sumoylation modulates the transcriptional activity of NRL on RHO and NR2E3 promoters, and is required for normal rod differentiation. As to expression, expressed in the brain and the retina. Expressed strongly in rod and cone cells (at protein level).

It is found in the cytoplasm. It localises to the nucleus. Acts as a transcriptional activator which regulates the expression of several rod-specific genes, including RHO and PDE6B. Also functions as a transcriptional coactivator, stimulating transcription mediated by the transcription factor CRX and NR2E3. Binds to the rhodopsin promoter in a sequence-specific manner. This Homo sapiens (Human) protein is Neural retina-specific leucine zipper protein (NRL).